Consider the following 353-residue polypeptide: UPF0283 membrane protein YcjF (353 aa).

Residues 1 to 19 (MSEPLKPRIDFAEPLKEEP) show a composition bias toward basic and acidic residues. Residues 1 to 35 (MSEPLKPRIDFAEPLKEEPTSAFKAQQTFSEAESR) are disordered. 3 helical membrane-spanning segments follow: residues 70-90 (MVMG…VQWT), 100-120 (VALG…GSVV), and 213-233 (ESTL…FIAW).

This sequence belongs to the UPF0283 family.

It is found in the cell inner membrane. The sequence is that of UPF0283 membrane protein YcjF from Salmonella dublin (strain CT_02021853).